Reading from the N-terminus, the 256-residue chain is Imidazole glycerol phosphate synthase subunit HisF (256 aa).

Residues D11 and D130 contribute to the active site.

It belongs to the HisA/HisF family. In terms of assembly, heterodimer of HisH and HisF.

It is found in the cytoplasm. It catalyses the reaction 5-[(5-phospho-1-deoxy-D-ribulos-1-ylimino)methylamino]-1-(5-phospho-beta-D-ribosyl)imidazole-4-carboxamide + L-glutamine = D-erythro-1-(imidazol-4-yl)glycerol 3-phosphate + 5-amino-1-(5-phospho-beta-D-ribosyl)imidazole-4-carboxamide + L-glutamate + H(+). Its pathway is amino-acid biosynthesis; L-histidine biosynthesis; L-histidine from 5-phospho-alpha-D-ribose 1-diphosphate: step 5/9. IGPS catalyzes the conversion of PRFAR and glutamine to IGP, AICAR and glutamate. The HisF subunit catalyzes the cyclization activity that produces IGP and AICAR from PRFAR using the ammonia provided by the HisH subunit. The protein is Imidazole glycerol phosphate synthase subunit HisF of Cupriavidus taiwanensis (strain DSM 17343 / BCRC 17206 / CCUG 44338 / CIP 107171 / LMG 19424 / R1) (Ralstonia taiwanensis (strain LMG 19424)).